We begin with the raw amino-acid sequence, 66 residues long: uncharacterized protein (66 aa).

The chain crosses the membrane as a helical span at residues 32–49 (WAFSLLIAGSAFLWIYMR).

The protein resides in the membrane. This is an uncharacterized protein from Bacillus subtilis (strain 168).